Consider the following 133-residue polypeptide: Ribosome-binding factor A (133 aa).

It belongs to the RbfA family. In terms of assembly, monomer. Binds 30S ribosomal subunits, but not 50S ribosomal subunits or 70S ribosomes.

It localises to the cytoplasm. Functionally, one of several proteins that assist in the late maturation steps of the functional core of the 30S ribosomal subunit. Associates with free 30S ribosomal subunits (but not with 30S subunits that are part of 70S ribosomes or polysomes). Required for efficient processing of 16S rRNA. May interact with the 5'-terminal helix region of 16S rRNA. In Acinetobacter baylyi (strain ATCC 33305 / BD413 / ADP1), this protein is Ribosome-binding factor A.